The sequence spans 415 residues: Lupus La protein homolog (415 aa).

Residues 7–99 (NEKMAALEAK…RRSPSRPLPE (93 aa)) enclose the HTH La-type RNA-binding domain. Phosphoserine occurs at positions 92 and 94. In terms of domain architecture, RRM spans 111-187 (RSVYIKGFPT…TNLLILFKED (77 aa)). Position 116 is an N6-acetyllysine (Lys116). Thr120 carries the phosphothreonine modification. N6-acetyllysine is present on residues Lys128 and Lys327. A xRRM domain is found at 226–343 (EGKMGCLLKF…HAARRFKGSH (118 aa)). Residues 323–415 (ESLNKWKSKG…KKRENGARDK (93 aa)) are disordered. The segment covering 328-341 (WKSKGGHAARRFKG) has biased composition (basic residues). At Lys356 the chain carries N6-acetyllysine. A Phosphothreonine modification is found at Thr377. The span at 377–415 (TRFDDDDHRRGPVKRGIDGRDREEPASKHKKRENGARDK) shows a compositional bias: basic and acidic residues.

As to quaternary structure, interacts with DDX15. May interact with RUFY1. Post-translationally, phosphorylated.

Its subcellular location is the nucleus. Its function is as follows. Binds to the 3' poly(U) terminus of nascent RNA polymerase III transcripts, protecting them from exonuclease digestion and facilitating their folding and maturation. This is Lupus La protein homolog (Ssb) from Rattus norvegicus (Rat).